A 4639-amino-acid polypeptide reads, in one-letter code: MGDSLENPDTSVDPIVNLSIANYDAFANYLRKAVTILLPEDDVVPASLNDALDDPVNQDTIRKFLSDPQVQALYVQRNCIKEDDSEQPAEGEDEKEQVTYQISNDVHFTNSRMASLACIKRGLVVEADKSIHSQLRLINFSDGSPYETLHAFISKSLAPYFKSYVKESGRADRDGDKMAPSVEKKLAELEMGLLHLQQNIDIPEITLTAHQTVNNVIRKCAEENRKAKVADFGDKVEDSSFLNLLQNGVNRWIAEIKKVTKLNRDPGSGTALQEISFWLNLERALYRIQEKRESPEVALTLDILKHGKRFHATVSFDTDTGLKQALATVADYNPLMKDFPINDLLSATELEKIRPAVQQIFAHLRKVRNTKYPIQRCLKLIEAISRDLSQQLLKVLGTRRLMHIPFDEFERVMNQCFEIFSCWDDEYDKLQGLLRDIVKKKRDEHLKMVWRVSPAHKKLQTRMEHMRKFRRQHEQLRTVILRVLRPTKPAVGDDGNVVETKQPYSLDAADANAIEEVNLAYENVKEVDCLDITKEGSEAWEAAVKRYEEKIDRVETRITAHLRDQLGTAKNANEMFRIFSRFNALFVRPHIRGAIREYQTQLIQRVKDDIEALHEKFKVQYPQSKSCRLSSVRDLPPVAGSIIWARQIDNQLTMYLKRVEDVLGKGWETHIEGQKLKADGDSFRAKLSISDVFHEWARKVQERNFGSTGRIFTIESTRSRIGRGNVLRLRVNFLPEIITLAKEVRNIKNLGFRVPLTIVNKAHQANQIYPYAISLIESVRTYERTLEKIEDRASIVPLVAGLRKDVLNLVSEGIGLIWESYKLDPYVIRLSECVTQFQEKVDDLLVVEEQLDVDVRSLETCPYSAATFVEILSKIQHAVDDLSLRQYSNLSVWVTRLDEEVEKKLALRLQAGIQAWTEALTGNKKEVDTSMDTDAPAQPTHKLGGDPQIQNAVHEIRITNQQMYLYPSIEEARFQIMQQFFAWQAIVTSQVRLQSTRYQVGLEKHVSQTYRNLLTKLPEGKILENAYGAIEQKVSEVRNYVDEWLRYQSLWDLQADMLYGRLGEDVNLWIKCLNDIKQSRTTFDTSDTRRAYGPIIIDYAKVQAKVTLKYDSWHKEALGKFGTLLGTEMTSFHSKVSKSRTDLEMQSIEAASTSDAVSFITYVQSLKKDMIAWDKQVEVFREAQRILERQRFQFPNTWLHVDNIEGEWSAFNEIIKRKDTAIQTQVASLQAKIVAEDKAVETRTVDFLNDWEKTKPTGGKIRPDDALQQLQIFESKYSRLKEERDNVVKAKEALELQESAVPNNSAERMNVALEELQDLRGVWSELSKVWTQIDETREKPWLSVQPRKLRQQLEAMMAQLKELPARLRMYESYEYVKKLIQSYIKVNMLIVELKSDALKERHWKQLTKQLRVNWVLSDLSLGQVWDVNLQKNEGIVKDIILVAQGEMALEEFLKQVRESWQNYELDLINYQNKCRIIRGWDDLFNKVKEHINSVAAMKLSPYYKVFEEEALTWEEKLNRINALFDVWIDVQRRWVYLEGIFSGSADIKTLLPVETSRFQSISSEFLGLMKKVTKSPKVMDVLNIPAVQRSLERLADLLGKIQKALGEYLERERTSFPRFYFVGDEDLLEIIGNSKNIARLQKHFKKMFAGVAAILLNEENNVILGISSREGEEVHFMNPVSTVEHPKINEWLSLVEKQMRFTLASLLAQAVQDIKQFRDGKIDPQAYMEWCDKYQAQIVVLAAQILWSEDVESALQQASENNQSKPMQRVLGNVESTLNVLADSVLQEQPPLRRRKLEHLINEFVHKRTVTRRLLNNGVTSPKSFQWLCEMRFYFDPRQTEVLQQLTIHMANARFFYGFEYLGVQDRLVQTPLTDRCYLTMTQALESRLGGSPFGPAGTGKTESVKALGNQLGRFVLVFNCDETFDFQAMGRIFVGLCQVGAWGCFDEFNRLEERMLSACSQQIQTIQEALKYEMDSNKESITVELVGKQVRVSPDMAIFITMNPGYAGRSNLPDNLKKLFRSLAMTTPDRQLIAEVMLFSQGFRSAEKLACKIVPFFKLCDEQLSNQSHYDFGLRALKSVLISAGNVKRDRIMKIKEQMKQRGDENIDEASVAENLPEQEILIQSVCETMVPKLVAEDIPLLFSLLSDVFPNVGYTRAEMKGLKEEIRKVCQEDYLVCGEGDEQGAAWMEKVLQLYQISNLNHGLMMVGPSGSGKSTAWKTLLKALERFEGVEGVAHVIDPKAISKEALYGVLDPNTREWTDGLFTHILRKIIDNVRGEINKRQWIIFDGDVDPEWVENLNSVLDDNKLLTLPNGERLSLPPNVRVMFEVQDLKFATLATVSRCGMVWFSEDVLSTEMIFENYLSRLRSIPLEDGDEDFVGVIKPAKDKEEEVSPSLQVQRDIALLLLPFFSADGIVVRTLEYAMDQEHIMDFTRLRALSSLFSMLNQAARNVLTFNAQHPDFPCSADQLEHYIPKALVYSVLWSFAGDAKLKVRIDLGDFVRSVTTVPLPGAAGAPIIDYEVNMSGDWVPWSNKVPVIEVETHKVASPDIVVPTLDTVRHESLLYTWLAEHKPLVLCGPPGSGKTMTLFSALRALPDMEVVGLNFSSATTPELLLKTFDHYCEYRKTPNGVVLSPVQIGKWLVLFCDEINLPDMDSYGTQRVISFLRQLVEHKGFYRASDQAWVSLERIQFVGACNPPTDPGRKPLSHRFLRHVPIIYVDYPGETSLKQIYGTFSRAMLRLMPALRGYAEPLTNAMVEFYLASQDRFTQDMQPHYVYSPREMTRWVRGICEAIRPLDSLPVEGLVRLWAHEALRLFQDRLVDDSERRWTNENIDLVGQKHFPGINQEEALQRPILYSNWLSKDYMPVNREELREYVHARLKVFYEEELDVPLVLFDEVLDHVLRIDRIFRQPQGHLLLIGVSGAGKTTLSRFVAWMNGLSIFQIKVHNKYTSEDFDEDLRCVLRRSGCKDEKIAFILDESNVLDSGFLERMNTLLANGEVPGLFEGDEYTTLMTQCKEGAQREGLMLDSSDELYKWFTQQVMRNLHVVFTMNPSTDGLKDRAATSPALFNRCVLNWFGDWSDSALFQVGKEFTTRVDLEKPNWHAPDFFPSVCPLVPANPTHRDAVINSCVYVHQTLHQANARLAKRGGRTMAVTPRHYLDFIHHFVKLYNEKRSDLEEQQLHLNVGLNKIAETVEQVEEMQKSLAVKKQELQAKNEAANAKLKQMFQDQQEAEKKKIQSQEIQIRLADQTVKIEEKRKYVMADLAQVEPAVIDAQAAVKSIRKQQLVEVRTMANPPSVVKLALESICLLLGENATDWKSIRAVIMRENFINSIVSNFGTENITDDVREKMKSKYLSNPDYNFEKVNRASMACGPMVKWAIAQIEYADMLKRVEPLREELRSLEEQADVNLASAKETKDLVEQLERSIAAYKEEYAQLISQAQAIKTDLENVQAKVDRSIALLKSLNIERERWESTSETFKSQMSTIIGDVLLSAAFIAYGGYFDQHYRLNLFTTWSQHLQAASIQYRADIARTEYLSNPDERLRWQANALPTDDLCTENAIMLKRFNRYPLIIDPSGQATTFLLNEYAGKKITKTSFLDDSFRKNLESALRFGNPLLVQDVENYDPILNPVLNRELRRTGGRVLITLGDQDIDLSPSFVIFLSTRDPTVEFPPDICSRVTFVNFTVTRSSLQSQCLNQVLKAERPDIDEKRSDLLKLQGEFRLRLRQLEKSLLQALNDAKGKILDDDSVITTLETLKKEAYDINQKVDETDKVIAEIETVSQQYLPLSVACSNIYFTMDSLNQVHFLYQYSLKMFLDIFSTVLYNNPKLEGRTDHSERLGIVTRDLFQVCYERVARGMIHIDRLTFALLMCKIHLKGTSESNLDAEFNFFLRSREGLLANPTPVEGLSAEQIESVNRLALRLPIFRKLLEKVRSIPELGAWLQQSSPEQVVPQLWDESKALSPIASSVHQLLLIQAFRPDRVIAAAHNVVNTVLGEDFMPNAEQELDFTSVVDKQLNCNTPALLCSVPGFDASGRVDDLAAEQNKQISSIAIGSAEGFNQAERAINMACKTGRWVLLKNVHLAPQWLVQLEKKMHSLQPHSGFRLFLTMEINPKVPVNLLRAGRIFVFEPPPGIRANLLRTFSTVPAARMMKTPSERARLYFLLAWFHAIVQERLRYVPLGWAKKYEFNESDLRVACDTLDTWIDTTAMGRTNLPPEKVPWDALVTLLSQSIYGGKIDNDFDQRLLTSFLKKLFTARSFEADFALVANVDGASGGLRHITMPDGTRRDHFLKWIENLTDRQTPSWLGLPNNAEKVLLTTRGTDLVSKLLKMQQLEDDDELAYSVEDQSEQSAVGRGEDGRPSWMKTLHNSATAWLELLPKNLQVLKRTVENIKDPLYRYFEREVTSGSRLLQTVILDLQDVVLICQGEKKQTNHHRSMLSELVRGIIPKGWKRYTVPAGCTVIQWITDFSNRVQQLQKVSQLVSQAGAKELQGFPVWLGGLLNPEAYITATRQCVAQANSWSLEELALDVTITDAGLKNDQKDCCFGVTGLKLQGAQCKNNELLLASTIMMDLPVTILKWIKISSEPRISKLTLPVYLNSTRTELLFTVDLAVAAGQESHSFYERGVAVLTSTALN.

The stem stretch occupies residues 1 to 1856; that stretch reads MGDSLENPDT…TIHMANARFF (1856 aa). Coiled coils occupy residues 530 to 565, 774 to 794, and 1264 to 1368; these read LDIT…LRDQ, SLIE…DRAS, and DDAL…ARLR. AAA stretches follow at residues 1857-2084, 2166-2437, 2541-2790, and 2884-3153; these read YGFE…VLIS, EEIR…FTRL, EVET…WVRG, and VFYE…GGRT. ATP is bound by residues 1895 to 1902, 2210 to 2217, 2580 to 2587, and 2922 to 2929; these read GPAGTGKT, GPSGSGKS, GPPGSGKT, and GVSGAGKT. Coiled-coil stretches lie at residues 3189 to 3261, 3382 to 3478, and 3723 to 3782; these read GLNK…EKRK, AIAQ…WEST, and EFRL…EIET. Residues 3189-3478 are stalk; it reads GLNKIAETVE…NIERERWEST (290 aa). AAA regions lie at residues 3539 to 3768 and 3989 to 4205; these read LSNP…DINQ and AHNV…TLDT.

It belongs to the dynein heavy chain family. As to quaternary structure, consists of at least two heavy chains and a number of intermediate and light chains.

The protein resides in the cytoplasm. Its subcellular location is the cytoskeleton. Its function is as follows. Cytoplasmic dynein acts as a motor for the intracellular retrograde motility of vesicles and organelles along microtubules. Dynein has ATPase activity; the force-producing power stroke is thought to occur on release of ADP. The chain is Dynein heavy chain, cytoplasmic (Dhc64C) from Drosophila melanogaster (Fruit fly).